The chain runs to 425 residues: Synaptotagmin-4 (425 aa).

At 1–16 (MAPITTSREEFDEIPT) the chain is on the vesicular side. A helical transmembrane segment spans residues 17-37 (VVGIFSAFGLVFTVSLFAWIC). The Cytoplasmic segment spans residues 38 to 425 (CQRKSSKSNK…IAKWHVLCDG (388 aa)). Basic and acidic residues predominate over residues 73 to 83 (FGADDKNEVKN). 2 disordered regions span residues 73 to 93 (FGADDKNEVKNKPAVPKNSLH) and 127 to 147 (LEGEKESVSPESLKSSTSLTS). Position 135 is a phosphoserine; by MAPK8 (Ser135). Residues 135-146 (SPESLKSSTSLT) show a composition bias toward low complexity. 2 C2 domains span residues 153–274 (KLGT…MLMN) and 287–420 (GRGE…AKWH). Residues Asp246, Ser249, and Asp252 each contribute to the Ca(2+) site.

It belongs to the synaptotagmin family. As to quaternary structure, interacts with KIF1A; the interaction increases in presence of calcium and decreases when SYT4 is phosphorylated at Ser-135. Ca(2+) is required as a cofactor. Phosphorylation at Ser-135 by MAPK8/JNK1 reduces interaction with KIF1A and neuronal dense core vesicles mobility. Expressed in melanocytes. Expressed in brain. Within brain, expression is highest in hippocampus, with substantial levels also detected in amygdala and thalamus.

The protein localises to the cytoplasmic vesicle. Its subcellular location is the secretory vesicle. The protein resides in the neuronal dense core vesicle membrane. Its function is as follows. Synaptotagmin family member which does not bind Ca(2+). Involved in neuronal dense core vesicles (DCVs) mobility through its interaction with KIF1A. Upon increased neuronal activity, phosphorylation by MAPK8/JNK1 destabilizes the interaction with KIF1A and captures DCVs to synapses. Plays a role in dendrite formation by melanocytes. The protein is Synaptotagmin-4 (SYT4) of Homo sapiens (Human).